The primary structure comprises 62 residues: Photosystem II reaction center protein Z (62 aa).

2 helical membrane-spanning segments follow: residues 8–28 (AVFALIATSSILLISVPVVFA) and 41–61 (FSGTSLWIGLVFLVAILNSLI).

Belongs to the PsbZ family. PSII is composed of 1 copy each of membrane proteins PsbA, PsbB, PsbC, PsbD, PsbE, PsbF, PsbH, PsbI, PsbJ, PsbK, PsbL, PsbM, PsbT, PsbY, PsbZ, Psb30/Ycf12, at least 3 peripheral proteins of the oxygen-evolving complex and a large number of cofactors. It forms dimeric complexes.

It localises to the plastid. The protein localises to the chloroplast thylakoid membrane. Functionally, may control the interaction of photosystem II (PSII) cores with the light-harvesting antenna, regulates electron flow through the 2 photosystem reaction centers. PSII is a light-driven water plastoquinone oxidoreductase, using light energy to abstract electrons from H(2)O, generating a proton gradient subsequently used for ATP formation. In Amborella trichopoda, this protein is Photosystem II reaction center protein Z.